The sequence spans 96 residues: MYPLLSPIGLLFYTRHCFYGIKEIVFFITIFNISIDQKTIHFRMNVFNGHLKSVETSSLGNLYFCTKSFRQIFIHYSVTGCKKRQYMFYKIFFVWC.

This is an uncharacterized protein from Homo sapiens (Human).